A 430-amino-acid polypeptide reads, in one-letter code: Adenylosuccinate synthetase (430 aa).

Residues 12–18 (GDEGKGK) and 40–42 (GHT) contribute to the GTP site. Asp-13 functions as the Proton acceptor in the catalytic mechanism. Asp-13 and Gly-40 together coordinate Mg(2+). Residues 13 to 16 (DEGK), 38 to 41 (NAGH), Thr-130, Arg-144, Gln-224, Thr-239, and Arg-303 each bind IMP. His-41 (proton donor) is an active-site residue. Residue 299–305 (ATTGRPR) participates in substrate binding. Residues Arg-305, 331-333 (KLD), and 413-415 (SVG) each bind GTP.

This sequence belongs to the adenylosuccinate synthetase family. As to quaternary structure, homodimer. Requires Mg(2+) as cofactor.

Its subcellular location is the cytoplasm. The catalysed reaction is IMP + L-aspartate + GTP = N(6)-(1,2-dicarboxyethyl)-AMP + GDP + phosphate + 2 H(+). It participates in purine metabolism; AMP biosynthesis via de novo pathway; AMP from IMP: step 1/2. Plays an important role in the de novo pathway of purine nucleotide biosynthesis. Catalyzes the first committed step in the biosynthesis of AMP from IMP. In Trichlorobacter lovleyi (strain ATCC BAA-1151 / DSM 17278 / SZ) (Geobacter lovleyi), this protein is Adenylosuccinate synthetase.